A 436-amino-acid polypeptide reads, in one-letter code: Ribulose bisphosphate carboxylase large chain (436 aa).

Positions 104 and 154 each coordinate substrate. The active-site Proton acceptor is the Lys156. Lys158 provides a ligand contact to substrate. Residues Lys182, Asp184, and Glu185 each contribute to the Mg(2+) site. Lys182 bears the N6-carboxylysine mark. Residue His275 is the Proton acceptor of the active site. Substrate-binding residues include Arg276, His308, and Ser360.

Belongs to the RuBisCO large chain family. Type I subfamily. As to quaternary structure, heterohexadecamer of 8 large chains and 8 small chains; disulfide-linked. The disulfide link is formed within the large subunit homodimers. The cofactor is Mg(2+). In terms of processing, the disulfide bond which can form in the large chain dimeric partners within the hexadecamer appears to be associated with oxidative stress and protein turnover.

It localises to the plastid. Its subcellular location is the chloroplast. The catalysed reaction is 2 (2R)-3-phosphoglycerate + 2 H(+) = D-ribulose 1,5-bisphosphate + CO2 + H2O. It carries out the reaction D-ribulose 1,5-bisphosphate + O2 = 2-phosphoglycolate + (2R)-3-phosphoglycerate + 2 H(+). Its function is as follows. RuBisCO catalyzes two reactions: the carboxylation of D-ribulose 1,5-bisphosphate, the primary event in carbon dioxide fixation, as well as the oxidative fragmentation of the pentose substrate in the photorespiration process. Both reactions occur simultaneously and in competition at the same active site. This Euglena anabaena (Euglenaria anabaena) protein is Ribulose bisphosphate carboxylase large chain.